Reading from the N-terminus, the 560-residue chain is Formate--tetrahydrofolate ligase (560 aa).

ATP is bound at residue 69–76 (TPAGEGKS).

This sequence belongs to the formate--tetrahydrofolate ligase family.

It catalyses the reaction (6S)-5,6,7,8-tetrahydrofolate + formate + ATP = (6R)-10-formyltetrahydrofolate + ADP + phosphate. It participates in one-carbon metabolism; tetrahydrofolate interconversion. This is Formate--tetrahydrofolate ligase from Listeria monocytogenes serotype 4b (strain CLIP80459).